The sequence spans 183 residues: ATP-dependent protease subunit HslV (183 aa).

The active site involves Thr12. Na(+)-binding residues include Ala166, Cys169, and Thr172.

The protein belongs to the peptidase T1B family. HslV subfamily. As to quaternary structure, a double ring-shaped homohexamer of HslV is capped on each side by a ring-shaped HslU homohexamer. The assembly of the HslU/HslV complex is dependent on binding of ATP.

It is found in the cytoplasm. The catalysed reaction is ATP-dependent cleavage of peptide bonds with broad specificity.. Its activity is regulated as follows. Allosterically activated by HslU binding. In terms of biological role, protease subunit of a proteasome-like degradation complex believed to be a general protein degrading machinery. The polypeptide is ATP-dependent protease subunit HslV (Afipia carboxidovorans (strain ATCC 49405 / DSM 1227 / KCTC 32145 / OM5) (Oligotropha carboxidovorans)).